A 511-amino-acid chain; its full sequence is RNA-splicing ligase RtcB homolog (511 aa).

Mn(2+) is bound by residues Asp125, Cys128, His233, His265, and His359. 232–236 lines the GMP pocket; it reads NHYAE. Residues 359-360, 408-411, Ser415, 434-437, and Lys510 each bind GMP; these read HN, GGTM, and HGAG. His434 acts as the GMP-histidine intermediate in catalysis.

Belongs to the RtcB family. Catalytic component of the tRNA-splicing ligase complex. It depends on Mn(2+) as a cofactor.

It carries out the reaction a 3'-end 3'-phospho-ribonucleotide-RNA + a 5'-end dephospho-ribonucleoside-RNA + GTP = a ribonucleotidyl-ribonucleotide-RNA + GMP + diphosphate. It catalyses the reaction a 3'-end 2',3'-cyclophospho-ribonucleotide-RNA + a 5'-end dephospho-ribonucleoside-RNA + GTP + H2O = a ribonucleotidyl-ribonucleotide-RNA + GMP + diphosphate + H(+). In terms of biological role, catalytic subunit of the tRNA-splicing ligase complex that acts by directly joining spliced tRNA halves to mature-sized tRNAs by incorporating the precursor-derived splice junction phosphate into the mature tRNA as a canonical 3',5'-phosphodiester. May act as an RNA ligase with broad substrate specificity, and may function toward other RNAs. The polypeptide is RNA-splicing ligase RtcB homolog (Plasmodium knowlesi (strain H)).